The primary structure comprises 183 residues: Potassium-transporting ATPase KdpC subunit (183 aa).

The helical transmembrane segment at 10–30 threads the bilayer; that stretch reads ASLLVLSLVTGVAYPLLVTGI.

The protein belongs to the KdpC family. In terms of assembly, the system is composed of three essential subunits: KdpA, KdpB and KdpC.

Its subcellular location is the cell inner membrane. In terms of biological role, part of the high-affinity ATP-driven potassium transport (or Kdp) system, which catalyzes the hydrolysis of ATP coupled with the electrogenic transport of potassium into the cytoplasm. This subunit acts as a catalytic chaperone that increases the ATP-binding affinity of the ATP-hydrolyzing subunit KdpB by the formation of a transient KdpB/KdpC/ATP ternary complex. The sequence is that of Potassium-transporting ATPase KdpC subunit from Pseudomonas aeruginosa (strain ATCC 15692 / DSM 22644 / CIP 104116 / JCM 14847 / LMG 12228 / 1C / PRS 101 / PAO1).